The sequence spans 157 residues: Phosphopantetheine adenylyltransferase (157 aa).

Thr8 provides a ligand contact to substrate. Residues 8 to 9 (TF) and His16 each bind ATP. Substrate contacts are provided by Lys40, Thr72, and Arg86. Residues 87 to 89 (GLR), Glu97, and 122 to 128 (YSFLSSS) contribute to the ATP site.

Belongs to the bacterial CoaD family. As to quaternary structure, homohexamer. It depends on Mg(2+) as a cofactor.

The protein localises to the cytoplasm. The enzyme catalyses (R)-4'-phosphopantetheine + ATP + H(+) = 3'-dephospho-CoA + diphosphate. The protein operates within cofactor biosynthesis; coenzyme A biosynthesis; CoA from (R)-pantothenate: step 4/5. Reversibly transfers an adenylyl group from ATP to 4'-phosphopantetheine, yielding dephospho-CoA (dPCoA) and pyrophosphate. In Prochlorococcus marinus (strain AS9601), this protein is Phosphopantetheine adenylyltransferase.